Consider the following 425-residue polypeptide: tRNA(Ile)-lysidine synthase (425 aa).

27–32 (SGGLDS) contacts ATP.

Belongs to the tRNA(Ile)-lysidine synthase family.

The protein localises to the cytoplasm. It carries out the reaction cytidine(34) in tRNA(Ile2) + L-lysine + ATP = lysidine(34) in tRNA(Ile2) + AMP + diphosphate + H(+). Functionally, ligates lysine onto the cytidine present at position 34 of the AUA codon-specific tRNA(Ile) that contains the anticodon CAU, in an ATP-dependent manner. Cytidine is converted to lysidine, thus changing the amino acid specificity of the tRNA from methionine to isoleucine. This is tRNA(Ile)-lysidine synthase from Streptococcus pneumoniae (strain P1031).